Here is a 277-residue protein sequence, read N- to C-terminus: Protein RKD3 (277 aa).

One can recognise an RWP-RK domain in the interval 142–226; sequence KRIIMKRRYR…LGNTKGRTPK (85 aa). Residues 201–246 are a coiled coil; the sequence is RKLTSLNALIANLKDLLGNTKGRTPKSKLRNALELLEMEKKMIEEV.

The protein resides in the nucleus. Its function is as follows. Putative transcription factor. The protein is Protein RKD3 (RKD3) of Arabidopsis thaliana (Mouse-ear cress).